Here is a 301-residue protein sequence, read N- to C-terminus: Lysozyme-like protein 3 (301 aa).

Residues 1-15 (MKLFALLVSITLCYS) form the signal peptide. One can recognise a Ch-type lysozyme domain in the interval 64–282 (HAYSVDISFH…HLSQIVHFST (219 aa)).

This sequence belongs to the glycosyl hydrolase 25 family.

Functionally, plays a role in the stress response to heavy metals such as copper, probably in a kgb-1-dependent manner. The protein is Lysozyme-like protein 3 of Caenorhabditis elegans.